The primary structure comprises 215 residues: Proapoptotic nucleolar protein 1 (215 aa).

A disordered region spans residues 35-215 (RKGTPTARCL…RLPAPRSAST (181 aa)). Positions 169-180 (PRPPQHLSPPQP) are enriched in pro residues. The interval 185–215 (MGAAEGSRRADTHHARRRRRARLPAPRSAST) is necessary for nucleolar localization.

In terms of tissue distribution, widely expressed.

The protein localises to the nucleus. It is found in the nucleolus. Apoptosis-inducing protein that modulates the tumor suppressor function of CDKN2A/p14ARF. Enhances the stability of CDKN2A/p14ARF protein by protecting it from degradation. May act as a tumor suppressor. This Homo sapiens (Human) protein is Proapoptotic nucleolar protein 1.